A 359-amino-acid chain; its full sequence is tRNA-specific 2-thiouridylase MnmA (359 aa).

ATP is bound by residues 6–13 (AMSGGVDS) and Leu32. Catalysis depends on Cys101, which acts as the Nucleophile. Cys101 and Cys193 are oxidised to a cystine. ATP is bound at residue Gly125. The interaction with tRNA stretch occupies residues 143–145 (KDQ). Cys193 acts as the Cysteine persulfide intermediate in catalysis.

This sequence belongs to the MnmA/TRMU family.

The protein localises to the cytoplasm. It carries out the reaction S-sulfanyl-L-cysteinyl-[protein] + uridine(34) in tRNA + AH2 + ATP = 2-thiouridine(34) in tRNA + L-cysteinyl-[protein] + A + AMP + diphosphate + H(+). In terms of biological role, catalyzes the 2-thiolation of uridine at the wobble position (U34) of tRNA, leading to the formation of s(2)U34. The sequence is that of tRNA-specific 2-thiouridylase MnmA from Mycobacterium sp. (strain JLS).